We begin with the raw amino-acid sequence, 222 residues long: Protein-L-isoaspartate O-methyltransferase (222 aa).

S65 is an active-site residue.

This sequence belongs to the methyltransferase superfamily. L-isoaspartyl/D-aspartyl protein methyltransferase family.

Its subcellular location is the cytoplasm. The enzyme catalyses [protein]-L-isoaspartate + S-adenosyl-L-methionine = [protein]-L-isoaspartate alpha-methyl ester + S-adenosyl-L-homocysteine. Catalyzes the methyl esterification of L-isoaspartyl residues in peptides and proteins that result from spontaneous decomposition of normal L-aspartyl and L-asparaginyl residues. It plays a role in the repair and/or degradation of damaged proteins. This chain is Protein-L-isoaspartate O-methyltransferase, found in Chlorobium luteolum (strain DSM 273 / BCRC 81028 / 2530) (Pelodictyon luteolum).